Here is a 241-residue protein sequence, read N- to C-terminus: Small ribosomal subunit protein uS3 (241 aa).

One can recognise a KH type-2 domain in the interval 39 to 108; it reads IREGVLKLLK…NLKVEVKVIE (70 aa). The segment at 215 to 241 is disordered; that stretch reads SQRVSEKAPMNNDRRFNNKNNNRGGRK. Positions 232 to 241 are enriched in low complexity; that stretch reads NKNNNRGGRK.

This sequence belongs to the universal ribosomal protein uS3 family. In terms of assembly, part of the 30S ribosomal subunit. Forms a tight complex with proteins S10 and S14.

In terms of biological role, binds the lower part of the 30S subunit head. Binds mRNA in the 70S ribosome, positioning it for translation. The chain is Small ribosomal subunit protein uS3 from Mesoplasma florum (strain ATCC 33453 / NBRC 100688 / NCTC 11704 / L1) (Acholeplasma florum).